The following is a 44-amino-acid chain: Phosphatase RapA inhibitor (44 aa).

A propeptide spanning residues 1 to 39 is cleaved from the precursor; that stretch reads MKSKWMSGLLLVAVGFSFTQVMVHAGETANTEGKTFHIA.

This sequence belongs to the Phr family. In terms of assembly, interacts with RapA and inhibits its interaction with Spo0F. In terms of processing, secreted with a propeptide domain, which is cleaved in the cell wall by the secreted serine proteases subtilisin and Vpr to produce a mature signaling peptide. Contains a predicted signal peptide cleavage site in the N-terminal region, however the propeptide is probably subject to only one processing event, at the N-terminal end of the mature peptide.

It is found in the secreted. The protein localises to the cytoplasm. Its activity is regulated as follows. Inhibition of RapA requires a free carboxylate group at the C-terminal end of the PhrA pentapeptide. A free C-terminal carboxylic acid PhrA pentapeptide inhibits RapA phosphatase activity at a 1:1 ratio and is approximately 200 fold more active than a C-terminal amide peptide. Signaling molecule involved in the regulation of sporulation. Secreted during production, but the mature peptide acts intracellularly, indicating that it needs to be imported into the cell to function. Inhibitor of the RapA phosphatase activity. Does not act on RapB. This chain is Phosphatase RapA inhibitor, found in Bacillus subtilis (strain 168).